Here is a 449-residue protein sequence, read N- to C-terminus: 23S rRNA (uracil(1939)-C(5))-methyltransferase RlmD (449 aa).

The region spanning 1-66 is the TRAM domain; the sequence is MGRSRYHNKL…AKFDEAKVVE (66 aa). The [4Fe-4S] cluster site is built by C79, C85, C88, and C169. S-adenosyl-L-methionine contacts are provided by Q280, F309, N314, E330, N357, and D379. C405 serves as the catalytic Nucleophile.

It belongs to the class I-like SAM-binding methyltransferase superfamily. RNA M5U methyltransferase family. RlmD subfamily.

The catalysed reaction is uridine(1939) in 23S rRNA + S-adenosyl-L-methionine = 5-methyluridine(1939) in 23S rRNA + S-adenosyl-L-homocysteine + H(+). Catalyzes the formation of 5-methyl-uridine at position 1939 (m5U1939) in 23S rRNA. This is 23S rRNA (uracil(1939)-C(5))-methyltransferase RlmD from Francisella tularensis subsp. holarctica (strain LVS).